The following is a 259-amino-acid chain: Deoxyribose-phosphate aldolase (259 aa).

Aspartate 102 acts as the Proton donor/acceptor in catalysis. Catalysis depends on lysine 167, which acts as the Schiff-base intermediate with acetaldehyde. Lysine 201 serves as the catalytic Proton donor/acceptor.

The protein belongs to the DeoC/FbaB aldolase family. DeoC type 2 subfamily.

It is found in the cytoplasm. It catalyses the reaction 2-deoxy-D-ribose 5-phosphate = D-glyceraldehyde 3-phosphate + acetaldehyde. The protein operates within carbohydrate degradation; 2-deoxy-D-ribose 1-phosphate degradation; D-glyceraldehyde 3-phosphate and acetaldehyde from 2-deoxy-alpha-D-ribose 1-phosphate: step 2/2. Functionally, catalyzes a reversible aldol reaction between acetaldehyde and D-glyceraldehyde 3-phosphate to generate 2-deoxy-D-ribose 5-phosphate. The polypeptide is Deoxyribose-phosphate aldolase (Serratia proteamaculans (strain 568)).